We begin with the raw amino-acid sequence, 274 residues long: tRNA-cytidine(32) 2-sulfurtransferase (274 aa).

The short motif at 40 to 45 (SGGKDS) is the PP-loop motif element. [4Fe-4S] cluster-binding residues include Cys115, Cys118, and Cys206.

This sequence belongs to the TtcA family. Homodimer. Mg(2+) is required as a cofactor. It depends on [4Fe-4S] cluster as a cofactor.

It is found in the cytoplasm. The enzyme catalyses cytidine(32) in tRNA + S-sulfanyl-L-cysteinyl-[cysteine desulfurase] + AH2 + ATP = 2-thiocytidine(32) in tRNA + L-cysteinyl-[cysteine desulfurase] + A + AMP + diphosphate + H(+). It functions in the pathway tRNA modification. Catalyzes the ATP-dependent 2-thiolation of cytidine in position 32 of tRNA, to form 2-thiocytidine (s(2)C32). The sulfur atoms are provided by the cysteine/cysteine desulfurase (IscS) system. The polypeptide is tRNA-cytidine(32) 2-sulfurtransferase (Pseudomonas paraeruginosa (strain DSM 24068 / PA7) (Pseudomonas aeruginosa (strain PA7))).